A 455-amino-acid chain; its full sequence is Serine incorporator 2 (455 aa).

A run of 11 helical transmembrane segments spans residues 5 to 27 (LGAC…ILCS), 40 to 57 (LIFT…IIML), 96 to 118 (AVYR…MLCV), 131 to 150 (GFWF…AFYI), 160 to 182 (FYFG…IDFA), 202 to 224 (YAGL…ALMF), 239 to 256 (FISL…AAVL), 268 to 290 (LLQA…SSIP), 317 to 339 (QWWD…FISL), 385 to 407 (TYSY…MTLT), and 422 to 444 (WTAV…WTLV).

It belongs to the TDE1 family.

The protein resides in the cell membrane. It catalyses the reaction a 1,2-diacyl-sn-glycero-3-phospho-L-serine(in) = a 1,2-diacyl-sn-glycero-3-phospho-L-serine(out). The enzyme catalyses a 1,2-diacyl-sn-glycero-3-phosphocholine(in) = a 1,2-diacyl-sn-glycero-3-phosphocholine(out). It carries out the reaction a 1,2-diacyl-sn-glycero-3-phosphoethanolamine(in) = a 1,2-diacyl-sn-glycero-3-phosphoethanolamine(out). Its function is as follows. Non-ATP-dependent, non-specific lipid transporter for phosphatidylserine, phosphatidylcholine, and phosphatidylethanolamine. Functions as a scramblase that flips lipids in both directions across the membrane. In contrast to SERINC3 and SERINC5, has no effect on HIV-1 particles infectivity. This is Serine incorporator 2 from Homo sapiens (Human).